We begin with the raw amino-acid sequence, 129 residues long: Fluoride-specific ion channel FluC (129 aa).

4 helical membrane passes run 5-25, 32-52, 60-80, and 99-119; these read LTIA…SGWV, AFPF…GLIM, LIPA…LTTF, and AMVN…LGVI. Na(+) contacts are provided by Gly75 and Thr78.

It belongs to the fluoride channel Fluc/FEX (TC 1.A.43) family.

Its subcellular location is the cell inner membrane. It carries out the reaction fluoride(in) = fluoride(out). With respect to regulation, na(+) is not transported, but it plays an essential structural role and its presence is essential for fluoride channel function. In terms of biological role, fluoride-specific ion channel. Important for reducing fluoride concentration in the cell, thus reducing its toxicity. In Pelobacter propionicus (strain DSM 2379 / NBRC 103807 / OttBd1), this protein is Fluoride-specific ion channel FluC.